Here is a 195-residue protein sequence, read N- to C-terminus: Holliday junction branch migration complex subunit RuvA (195 aa).

Residues 1-64 (MIASIRGIIQ…EDALTLYGFS (64 aa)) form a domain I region. The domain II stretch occupies residues 65–142 (DPAQRNLFEQ…DLRQLSGTTP (78 aa)). The segment at 143–151 (GNVSTLDRE) is flexible linker. The segment at 151–195 (ELTDILISLGYSATEAAAAIAALPGDAPPTLEERLRLALRYFGSA) is domain III.

It belongs to the RuvA family. As to quaternary structure, homotetramer. Forms an RuvA(8)-RuvB(12)-Holliday junction (HJ) complex. HJ DNA is sandwiched between 2 RuvA tetramers; dsDNA enters through RuvA and exits via RuvB. An RuvB hexamer assembles on each DNA strand where it exits the tetramer. Each RuvB hexamer is contacted by two RuvA subunits (via domain III) on 2 adjacent RuvB subunits; this complex drives branch migration. In the full resolvosome a probable DNA-RuvA(4)-RuvB(12)-RuvC(2) complex forms which resolves the HJ.

The protein localises to the cytoplasm. The RuvA-RuvB-RuvC complex processes Holliday junction (HJ) DNA during genetic recombination and DNA repair, while the RuvA-RuvB complex plays an important role in the rescue of blocked DNA replication forks via replication fork reversal (RFR). RuvA specifically binds to HJ cruciform DNA, conferring on it an open structure. The RuvB hexamer acts as an ATP-dependent pump, pulling dsDNA into and through the RuvAB complex. HJ branch migration allows RuvC to scan DNA until it finds its consensus sequence, where it cleaves and resolves the cruciform DNA. The chain is Holliday junction branch migration complex subunit RuvA from Chloroflexus aurantiacus (strain ATCC 29364 / DSM 637 / Y-400-fl).